Reading from the N-terminus, the 503-residue chain is Na(+)-translocating NADH-quinone reductase subunit B (503 aa).

3 helical membrane-spanning segments follow: residues 55–75, 120–142, and 160–180; these read MMLV…NSGL, IFLP…FAII, and LILP…FGVV. Thr-248 is subject to FMN phosphoryl threonine. Helical transmembrane passes span 361 to 381, 384 to 404, 417 to 437, 452 to 472, and 475 to 495; these read TSTV…IASW, MLSF…MSIL, FFIP…LVFM, WLYG…NPAY, and GVML…NIAL.

Belongs to the NqrB/RnfD family. In terms of assembly, composed of six subunits; NqrA, NqrB, NqrC, NqrD, NqrE and NqrF. It depends on FMN as a cofactor.

The protein localises to the cell inner membrane. It catalyses the reaction a ubiquinone + n Na(+)(in) + NADH + H(+) = a ubiquinol + n Na(+)(out) + NAD(+). In terms of biological role, NQR complex catalyzes the reduction of ubiquinone-1 to ubiquinol by two successive reactions, coupled with the transport of Na(+) ions from the cytoplasm to the periplasm. NqrA to NqrE are probably involved in the second step, the conversion of ubisemiquinone to ubiquinol. The protein is Na(+)-translocating NADH-quinone reductase subunit B of Chlamydia trachomatis serovar A (strain ATCC VR-571B / DSM 19440 / HAR-13).